The chain runs to 276 residues: 2-dehydro-3-deoxyphosphooctonate aldolase (276 aa).

The protein belongs to the KdsA family.

It localises to the cytoplasm. The enzyme catalyses D-arabinose 5-phosphate + phosphoenolpyruvate + H2O = 3-deoxy-alpha-D-manno-2-octulosonate-8-phosphate + phosphate. It functions in the pathway carbohydrate biosynthesis; 3-deoxy-D-manno-octulosonate biosynthesis; 3-deoxy-D-manno-octulosonate from D-ribulose 5-phosphate: step 2/3. It participates in bacterial outer membrane biogenesis; lipopolysaccharide biosynthesis. This is 2-dehydro-3-deoxyphosphooctonate aldolase from Xanthomonas euvesicatoria pv. vesicatoria (strain 85-10) (Xanthomonas campestris pv. vesicatoria).